Reading from the N-terminus, the 145-residue chain is Anaerobic nitrite reductase NSHB5 (145 aa).

In terms of domain architecture, Globin spans 2-142 (GFSETQEELV…LAAAIKEEMK (141 aa)). The Homodimerization signature appears at 35–39 (EIAPA). Residues Ser45, His59, Lys61, Arg84, Thr88, and His89 each coordinate heme b. The short motif at 96-108 (DAHFEVVKTALLD) is the Homodimerization element.

It belongs to the plant globin family. In terms of assembly, homodimer. Requires heme b as cofactor. In terms of tissue distribution, expressed in embryonic (embryos, coleoptiles and seminal roots) and vegetative (leaves and roots) organs.

It is found in the cytoplasm. Its subcellular location is the nucleus. The enzyme catalyses Fe(III)-heme b-[protein] + nitric oxide + H2O = Fe(II)-heme b-[protein] + nitrite + 2 H(+). Phytoglobin that reduces nitrite to nitric oxide under anoxic conditions (e.g. during flooding or in waterlogged soil). May not function as an oxygen storage or transport protein. Has an unusually high affinity for O(2) through an hexacoordinate heme iron because of a very low dissociation constant. The protein is Anaerobic nitrite reductase NSHB5 of Oryza sativa subsp. indica (Rice).